The primary structure comprises 415 residues: L-cysteine:1D-myo-inositol 2-amino-2-deoxy-alpha-D-glucopyranoside ligase (415 aa).

Zn(2+) is bound at residue C43. Residues 43–46 (CGIT), T58, and 81–83 (NVT) each bind L-cysteinyl-5'-AMP. The 'HIGH' region motif lies at 45–55 (ITPYDATHLGH). Residues 188–193 (ERGGDP) carry the 'ERGGDP' region motif. Residue W229 coordinates L-cysteinyl-5'-AMP. C233 contacts Zn(2+). 251-253 (GSD) contacts L-cysteinyl-5'-AMP. H258 contacts Zn(2+). V285 provides a ligand contact to L-cysteinyl-5'-AMP. Positions 291–295 (KMSKS) match the 'KMSKS' region motif.

Belongs to the class-I aminoacyl-tRNA synthetase family. MshC subfamily. Monomer. Zn(2+) serves as cofactor.

The catalysed reaction is 1D-myo-inositol 2-amino-2-deoxy-alpha-D-glucopyranoside + L-cysteine + ATP = 1D-myo-inositol 2-(L-cysteinylamino)-2-deoxy-alpha-D-glucopyranoside + AMP + diphosphate + H(+). Functionally, catalyzes the ATP-dependent condensation of GlcN-Ins and L-cysteine to form L-Cys-GlcN-Ins. This chain is L-cysteine:1D-myo-inositol 2-amino-2-deoxy-alpha-D-glucopyranoside ligase, found in Cellulomonas flavigena (strain ATCC 482 / DSM 20109 / BCRC 11376 / JCM 18109 / NBRC 3775 / NCIMB 8073 / NRS 134).